Reading from the N-terminus, the 300-residue chain is GTPase Era (300 aa).

In terms of domain architecture, Era-type G spans Arg-8–Glu-176. The interval Gly-16–Ser-23 is G1. Residue Gly-16–Ser-23 coordinates GTP. Residues Gln-42–His-46 are G2. Residues Asp-63–Gly-66 form a G3 region. GTP is bound by residues Asp-63–Met-67 and Asn-125–Asp-128. The interval Asn-125–Asp-128 is G4. The segment at Val-155–Ala-157 is G5. Positions Val-199–Gly-283 constitute a KH type-2 domain.

It belongs to the TRAFAC class TrmE-Era-EngA-EngB-Septin-like GTPase superfamily. Era GTPase family. In terms of assembly, monomer.

The protein localises to the cytoplasm. The protein resides in the cell inner membrane. Functionally, an essential GTPase that binds both GDP and GTP, with rapid nucleotide exchange. Plays a role in 16S rRNA processing and 30S ribosomal subunit biogenesis and possibly also in cell cycle regulation and energy metabolism. The polypeptide is GTPase Era (Pseudomonas fluorescens (strain ATCC BAA-477 / NRRL B-23932 / Pf-5)).